The chain runs to 65 residues: Large ribosomal subunit protein uL29 (65 aa).

It belongs to the universal ribosomal protein uL29 family.

The chain is Large ribosomal subunit protein uL29 from Acinetobacter baylyi (strain ATCC 33305 / BD413 / ADP1).